A 347-amino-acid chain; its full sequence is GMP reductase (347 aa).

108–131 contributes to the NADP(+) binding site; sequence NDFLKLQRILALSPALRFICVDVA. Gly181 and Gly183 together coordinate K(+). The active-site Thioimidate intermediate is the Cys186. 216 to 239 contributes to the NADP(+) binding site; it reads IVGDGGCTCPGDVAKAFGGGADFV.

This sequence belongs to the IMPDH/GMPR family. GuaC type 1 subfamily. Homotetramer.

It carries out the reaction IMP + NH4(+) + NADP(+) = GMP + NADPH + 2 H(+). Functionally, catalyzes the irreversible NADPH-dependent deamination of GMP to IMP. It functions in the conversion of nucleobase, nucleoside and nucleotide derivatives of G to A nucleotides, and in maintaining the intracellular balance of A and G nucleotides. This Tolumonas auensis (strain DSM 9187 / NBRC 110442 / TA 4) protein is GMP reductase.